The following is a 170-amino-acid chain: Adenine phosphoribosyltransferase (170 aa).

It belongs to the purine/pyrimidine phosphoribosyltransferase family. Homodimer.

The protein resides in the cytoplasm. It carries out the reaction AMP + diphosphate = 5-phospho-alpha-D-ribose 1-diphosphate + adenine. It participates in purine metabolism; AMP biosynthesis via salvage pathway; AMP from adenine: step 1/1. Functionally, catalyzes a salvage reaction resulting in the formation of AMP, that is energically less costly than de novo synthesis. The chain is Adenine phosphoribosyltransferase from Mycoplasmopsis pulmonis (strain UAB CTIP) (Mycoplasma pulmonis).